A 549-amino-acid chain; its full sequence is Putative acyl-CoA synthetase YngI (549 aa).

Residues 198-206 (TSGTTGFPK), D423, R438, and K529 each bind ATP.

This sequence belongs to the ATP-dependent AMP-binding enzyme family.

The polypeptide is Putative acyl-CoA synthetase YngI (yngI) (Bacillus subtilis (strain 168)).